The chain runs to 116 residues: UPF0499 protein ATEG_06693 (116 aa).

The first 18 residues, 1-18, serve as a signal peptide directing secretion; it reads MKLTGLLSLALLTTLALA. 3 cysteine pairs are disulfide-bonded: Cys-32-Cys-46, Cys-36-Cys-49, and Cys-42-Cys-54.

This sequence belongs to the UPF0499 family.

The protein resides in the secreted. This chain is UPF0499 protein ATEG_06693, found in Aspergillus terreus (strain NIH 2624 / FGSC A1156).